The chain runs to 441 residues: Probable dihydroorotase-like protein (441 aa).

The disordered stretch occupies residues 121–140 (VNAHHQPPGDPQAENRPDSA).

This sequence belongs to the metallo-dependent hydrolases superfamily. DHOase family. PyrC' subfamily.

Functionally, non-functional DHOase. This chain is Probable dihydroorotase-like protein (pyrC'), found in Synechocystis sp. (strain ATCC 27184 / PCC 6803 / Kazusa).